Reading from the N-terminus, the 614-residue chain is V-type proton ATPase catalytic subunit A (614 aa).

Residue 247 to 254 (GAFGCGKT) coordinates ATP.

Belongs to the ATPase alpha/beta chains family. As to quaternary structure, V-ATPase is a heteromultimeric enzyme made up of two complexes: the ATP-hydrolytic V1 complex and the proton translocation V0 complex. The V1 complex consists of three catalytic AB heterodimers that form a heterohexamer, three peripheral stalks each consisting of EG heterodimers, one central rotor including subunits D and F, and the regulatory subunits C and H. The proton translocation complex V0 consists of the proton transport subunit a, a ring of proteolipid subunits c9c'', rotary subunit d, subunits e and f, and the accessory subunits VhaAC45 and ATP6AP2.

The catalysed reaction is ATP + H2O + 4 H(+)(in) = ADP + phosphate + 5 H(+)(out). With respect to regulation, ATP hydrolysis occurs at the interface between the nucleotide-binding domains of subunits A and B. ATP hydrolysis triggers a conformational change in the subunits D and F, which induces a shift of subunit d. The c-ring is subsequently rotated and results in a continuous proton translocation across the membrane. Its function is as follows. Catalytic subunit of the V1 complex of vacuolar(H+)-ATPase (V-ATPase), a multisubunit enzyme composed of a peripheral complex (V1) that hydrolyzes ATP and a membrane integral complex (V0) that translocates protons. V-ATPase is responsible for acidifying and maintaining the pH of intracellular compartments and in some cell types, is targeted to the plasma membrane, where it is responsible for acidifying the extracellular environment. This chain is V-type proton ATPase catalytic subunit A, found in Anopheles gambiae (African malaria mosquito).